Here is a 97-residue protein sequence, read N- to C-terminus: Insertion element IS2 uncharacterized 11.1 kDa protein (97 aa).

The chain is Insertion element IS2 uncharacterized 11.1 kDa protein from Escherichia coli.